The primary structure comprises 190 residues: Cancer-related nucleoside-triphosphatase homolog (190 aa).

Ala-2 is subject to N-acetylalanine. ATP contacts are provided by residues 9-16 (GPPGVGKT) and 109-116 (ICVIDEVG). Lys-165 is modified (N6-acetyllysine).

This sequence belongs to the THEP1 NTPase family. As to quaternary structure, monomer.

The enzyme catalyses a ribonucleoside 5'-triphosphate + H2O = a ribonucleoside 5'-diphosphate + phosphate + H(+). It carries out the reaction 5-methyl-UTP + H2O = 5-methyl-UDP + phosphate + H(+). It catalyses the reaction CTP + H2O = CDP + phosphate + H(+). The catalysed reaction is ATP + H2O = ADP + phosphate + H(+). The enzyme catalyses GTP + H2O = GDP + phosphate + H(+). Functionally, has nucleotide phosphatase activity towards ATP, GTP, CTP, TTP and UTP. Hydrolyzes nucleoside diphosphates with lower efficiency. This is Cancer-related nucleoside-triphosphatase homolog (NTPCR) from Bos taurus (Bovine).